Reading from the N-terminus, the 304-residue chain is tRNA dimethylallyltransferase (304 aa).

ATP is bound at residue 10–17 (GPTASGKT). A substrate-binding site is contributed by 12–17 (TASGKT). Interaction with substrate tRNA stretches follow at residues 35–38 (DSAL), 159–163 (QRLSR), and 240–245 (RCVGYR).

The protein belongs to the IPP transferase family. In terms of assembly, monomer. Mg(2+) is required as a cofactor.

The catalysed reaction is adenosine(37) in tRNA + dimethylallyl diphosphate = N(6)-dimethylallyladenosine(37) in tRNA + diphosphate. Functionally, catalyzes the transfer of a dimethylallyl group onto the adenine at position 37 in tRNAs that read codons beginning with uridine, leading to the formation of N6-(dimethylallyl)adenosine (i(6)A). The chain is tRNA dimethylallyltransferase from Shewanella sp. (strain W3-18-1).